A 266-amino-acid polypeptide reads, in one-letter code: Undecaprenyl-diphosphatase (266 aa).

The next 8 helical transmembrane spans lie at 1–21 (MDTF…FLPI), 39–59 (QGLS…VIYF), 87–107 (WWII…KDFI), 111–131 (LRSA…LWWA), 149–169 (ALLI…RSGA), 183–203 (AAAR…AILV), 218–238 (ALTL…HYFL), and 246–266 (MTPF…FIFL).

The protein belongs to the UppP family.

It localises to the cell inner membrane. It carries out the reaction di-trans,octa-cis-undecaprenyl diphosphate + H2O = di-trans,octa-cis-undecaprenyl phosphate + phosphate + H(+). Its function is as follows. Catalyzes the dephosphorylation of undecaprenyl diphosphate (UPP). Confers resistance to bacitracin. This chain is Undecaprenyl-diphosphatase, found in Shewanella putrefaciens (strain CN-32 / ATCC BAA-453).